The chain runs to 335 residues: Tryptophan--tRNA ligase (335 aa).

Residues 19–21 and 28–29 contribute to the ATP site; these read QPS and GN. Positions 20 to 29 match the 'HIGH' region motif; the sequence is PSSGMLHLGN. L-tryptophan is bound at residue aspartate 143. ATP is bound by residues 155-157, isoleucine 192, and 201-205; these read GAD and KMSKS. The 'KMSKS' region signature appears at 201–205; it reads KMSKS.

This sequence belongs to the class-I aminoacyl-tRNA synthetase family. Homodimer.

The protein resides in the cytoplasm. The catalysed reaction is tRNA(Trp) + L-tryptophan + ATP = L-tryptophyl-tRNA(Trp) + AMP + diphosphate + H(+). Its function is as follows. Catalyzes the attachment of tryptophan to tRNA(Trp). This is Tryptophan--tRNA ligase from Tropheryma whipplei (strain Twist) (Whipple's bacillus).